A 349-amino-acid polypeptide reads, in one-letter code: tRNA pseudouridine synthase D (349 aa).

Phe27 contacts substrate. Catalysis depends on Asp80, which acts as the Nucleophile. Asn129 is a binding site for substrate. The region spanning 155–303 is the TRUD domain; that stretch reads GVPNYFGAQR…VEAARRAMLL (149 aa). Phe329 contributes to the substrate binding site.

Belongs to the pseudouridine synthase TruD family.

The catalysed reaction is uridine(13) in tRNA = pseudouridine(13) in tRNA. Responsible for synthesis of pseudouridine from uracil-13 in transfer RNAs. This Escherichia coli O6:H1 (strain CFT073 / ATCC 700928 / UPEC) protein is tRNA pseudouridine synthase D.